The chain runs to 492 residues: 3-octaprenyl-4-hydroxybenzoate carboxy-lyase (492 aa).

A Mn(2+)-binding site is contributed by Asn-175. Prenylated FMN contacts are provided by residues 178 to 180 (IYR), 192 to 194 (RWL), and 197 to 198 (RG). Glu-241 serves as a coordination point for Mn(2+). The active-site Proton donor is the Asp-290.

The protein belongs to the UbiD family. Homohexamer. Requires prenylated FMN as cofactor. Mn(2+) is required as a cofactor.

It localises to the cell membrane. The enzyme catalyses a 4-hydroxy-3-(all-trans-polyprenyl)benzoate + H(+) = a 2-(all-trans-polyprenyl)phenol + CO2. It functions in the pathway cofactor biosynthesis; ubiquinone biosynthesis. Functionally, catalyzes the decarboxylation of 3-octaprenyl-4-hydroxy benzoate to 2-octaprenylphenol, an intermediate step in ubiquinone biosynthesis. In Salmonella typhimurium (strain LT2 / SGSC1412 / ATCC 700720), this protein is 3-octaprenyl-4-hydroxybenzoate carboxy-lyase.